The chain runs to 453 residues: Probable exopolygalacturonase B (453 aa).

The N-terminal stretch at Met-1–Ser-16 is a signal peptide. Asn-185 and Asn-225 each carry an N-linked (GlcNAc...) asparagine glycan. Asp-255 serves as the catalytic Proton donor. Residues Cys-257 and Cys-274 are joined by a disulfide bond. N-linked (GlcNAc...) asparagine glycosylation is found at Asn-263 and Asn-275. His-278 is an active-site residue. 2 PbH1 repeats span residues Ile-295–Ala-316 and Ile-327–Gln-348. Asn-302, Asn-329, Asn-354, and Asn-366 each carry an N-linked (GlcNAc...) asparagine glycan. A PbH1 3 repeat occupies Pro-362–Asn-405. Residues Cys-392 and Cys-398 are joined by a disulfide bond. Asn-436 carries an N-linked (GlcNAc...) asparagine glycan.

The protein belongs to the glycosyl hydrolase 28 family.

The protein resides in the secreted. The enzyme catalyses [(1-&gt;4)-alpha-D-galacturonosyl](n) + H2O = alpha-D-galacturonate + [(1-&gt;4)-alpha-D-galacturonosyl](n-1). Its function is as follows. Specific in hydrolyzing the terminal glycosidic bond of polygalacturonic acid and oligogalacturonates. This is Probable exopolygalacturonase B (pgxB) from Aspergillus fumigatus (strain CBS 144.89 / FGSC A1163 / CEA10) (Neosartorya fumigata).